We begin with the raw amino-acid sequence, 155 residues long: Small ribosomal subunit protein uS7c (155 aa).

This sequence belongs to the universal ribosomal protein uS7 family. Part of the 30S ribosomal subunit.

Its subcellular location is the plastid. It is found in the chloroplast. One of the primary rRNA binding proteins, it binds directly to 16S rRNA where it nucleates assembly of the head domain of the 30S subunit. This is Small ribosomal subunit protein uS7c (rps7) from Cornus mas (Cornelian cherry dogwood).